A 753-amino-acid chain; its full sequence is Rsm22-cox11 tandem protein 1, mitochondrial (753 aa).

A mitochondrion-targeting transit peptide spans 1–39 (MPILTCRYKILFLYNLRNCFTFQNQRCLIPYGTTTTIRW). Residues Cys-323, Cys-329, Cys-342, and Cys-430 each coordinate [4Fe-4S] cluster. The chain crosses the membrane as a helical span at residues 571–591 (IYYLVAISIFALGLTYAAVPL). Residues 592 to 753 (YRLFCSKTGY…TNGNLLTKLN (162 aa)) lie on the Mitochondrial intermembrane side of the membrane.

In the N-terminal section; belongs to the methyltransferase superfamily. Rsm22 family. It in the C-terminal section; belongs to the COX11/CtaG family. As to quaternary structure, associates with the mitochondrial ribosome (mitoribosome). Only transiently interacts with the mitoribosome. Post-translationally, specific enzymatic cleavages in vivo by mitochondrial processing peptidase (MPP) yield mature proteins including rsm22-1 and cox11-1.

It localises to the mitochondrion. The protein resides in the mitochondrion inner membrane. In terms of biological role, mitochondrial ribosome (mitoribosome) assembly factor. Binds at the interface of the head and body domains of the mitochondrial small ribosomal subunit (mt-SSU), occluding the mRNA channel and preventing compaction of the head domain towards the body. Probable inactive methyltransferase: retains the characteristic folding and ability to bind S-adenosyl-L-methionine, but it probably lost its methyltransferase activity. Exerts its effect at some terminal stage of cytochrome c oxidase synthesis, probably by being involved in the insertion of the copper B into subunit I. The protein is Rsm22-cox11 tandem protein 1, mitochondrial (cox1101) of Schizosaccharomyces pombe (strain 972 / ATCC 24843) (Fission yeast).